Consider the following 322-residue polypeptide: Ferredoxin--NADP reductase (322 aa).

Positions 37, 45, 50, 91, 128, and 290 each coordinate FAD.

This sequence belongs to the ferredoxin--NADP reductase type 2 family. Homodimer. FAD is required as a cofactor.

The catalysed reaction is 2 reduced [2Fe-2S]-[ferredoxin] + NADP(+) + H(+) = 2 oxidized [2Fe-2S]-[ferredoxin] + NADPH. In Malacoplasma penetrans (strain HF-2) (Mycoplasma penetrans), this protein is Ferredoxin--NADP reductase.